The following is a 241-amino-acid chain: Small ribosomal subunit protein uS3 (241 aa).

One can recognise a KH type-2 domain in the interval Ile-39 to Glu-108. Residues Ser-215–Lys-241 are disordered. A compositionally biased stretch (low complexity) spans Asn-232 to Lys-241.

The protein belongs to the universal ribosomal protein uS3 family. As to quaternary structure, part of the 30S ribosomal subunit. Forms a tight complex with proteins S10 and S14.

Binds the lower part of the 30S subunit head. Binds mRNA in the 70S ribosome, positioning it for translation. This chain is Small ribosomal subunit protein uS3, found in Mesoplasma florum (strain ATCC 33453 / NBRC 100688 / NCTC 11704 / L1) (Acholeplasma florum).